We begin with the raw amino-acid sequence, 265 residues long: MQPISIKDVESDQGKVYIVNALKDLVCKCLLEFVDIQIESFMYPDDPKCFTRIFKGNKIVNEASDKDSKVRSYPSSLGVGHSALFPLIYIRQKTNSLRFLNDPKQLPTPLVDDMNAKFKGIIKVYENLIHLYHSYQTVDCNNMNQQKLLGDLVSRGNFMLDILHGYVTIASTIVRDSKDANILIDTVNRFIHDTILFHKRIIHNSNAYTEYHVMKRGMQRNQSEETLVELEFRILDVSDVNLDNEFDDFLQHRKTSLKITHRRVI.

Ser223 is subject to Phosphoserine.

This is an uncharacterized protein from Saccharomyces cerevisiae (strain ATCC 204508 / S288c) (Baker's yeast).